The chain runs to 104 residues: L-rhamnose mutarotase (104 aa).

Tyr18 contacts substrate. His22 (proton donor) is an active-site residue. Residues Tyr41 and 76-77 (WW) each bind substrate.

Belongs to the rhamnose mutarotase family. In terms of assembly, homodimer.

Its subcellular location is the cytoplasm. The catalysed reaction is alpha-L-rhamnose = beta-L-rhamnose. Its pathway is carbohydrate metabolism; L-rhamnose metabolism. Functionally, involved in the anomeric conversion of L-rhamnose. This Salmonella agona (strain SL483) protein is L-rhamnose mutarotase.